Here is a 935-residue protein sequence, read N- to C-terminus: Kinesin heavy chain (935 aa).

The region spanning 5–329 (NIKVVCRFRP…LRFGARAKSI (325 aa)) is the Kinesin motor domain. ATP-binding positions include 87 to 94 (GQTGSGKT) and 237 to 244 (GSEKVGKT). Residues 342 to 887 (AELKALLKKV…SQKSQNSLAA (546 aa)) are a coiled coil. Disordered regions lie at residues 400 to 419 (APGF…TPVP) and 898 to 935 (RGNG…MNSR).

It belongs to the TRAFAC class myosin-kinesin ATPase superfamily. Kinesin family. Kinesin subfamily.

It localises to the cytoplasm. Its subcellular location is the cytoskeleton. Functionally, kinesin is a microtubule-associated force-producing protein that may play a role in organelle transport. Its motor activity is directed toward the microtubule's plus end. The speed of this motor is 4-5 times faster than its animal counterparts. This chain is Kinesin heavy chain, found in Syncephalastrum racemosum (Filamentous fungus).